A 167-amino-acid chain; its full sequence is Translationally-controlled tumor protein homolog (167 aa).

The region spanning Met1–Ile167 is the TCTP domain.

Belongs to the TCTP family.

The protein localises to the cytoplasm. It localises to the cytoskeleton. In terms of biological role, involved in protein synthesis. Involved in microtubule stabilization. The chain is Translationally-controlled tumor protein homolog from Yarrowia lipolytica (strain CLIB 122 / E 150) (Yeast).